The sequence spans 92 residues: Ribonuclease P protein component 1 (92 aa).

Belongs to the eukaryotic/archaeal RNase P protein component 1 family. In terms of assembly, consists of a catalytic RNA component and at least 4-5 protein subunits.

The protein localises to the cytoplasm. The enzyme catalyses Endonucleolytic cleavage of RNA, removing 5'-extranucleotides from tRNA precursor.. Part of ribonuclease P, a protein complex that generates mature tRNA molecules by cleaving their 5'-ends. This chain is Ribonuclease P protein component 1, found in Desulfurococcus amylolyticus (strain DSM 18924 / JCM 16383 / VKM B-2413 / 1221n) (Desulfurococcus kamchatkensis).